The chain runs to 376 residues: Carbamoyl phosphate synthase small chain (376 aa).

The interval 1-184 is CPSase; sequence MKAILALADG…SEGYQQQTGE (184 aa). L-glutamine is bound by residues serine 45, glycine 236, and glycine 238. In terms of domain architecture, Glutamine amidotransferase type-1 spans 188–374; it reads KVVAYDFGIK…ADLMEKNRQS (187 aa). Residue cysteine 263 is the Nucleophile of the active site. L-glutamine contacts are provided by leucine 264, glutamine 267, asparagine 305, glycine 307, and phenylalanine 308. Active-site residues include histidine 347 and glutamate 349.

The protein belongs to the CarA family. In terms of assembly, composed of two chains; the small (or glutamine) chain promotes the hydrolysis of glutamine to ammonia, which is used by the large (or ammonia) chain to synthesize carbamoyl phosphate. Tetramer of heterodimers (alpha,beta)4.

The enzyme catalyses hydrogencarbonate + L-glutamine + 2 ATP + H2O = carbamoyl phosphate + L-glutamate + 2 ADP + phosphate + 2 H(+). The catalysed reaction is L-glutamine + H2O = L-glutamate + NH4(+). The protein operates within amino-acid biosynthesis; L-arginine biosynthesis; carbamoyl phosphate from bicarbonate: step 1/1. It participates in pyrimidine metabolism; UMP biosynthesis via de novo pathway; (S)-dihydroorotate from bicarbonate: step 1/3. In terms of biological role, small subunit of the glutamine-dependent carbamoyl phosphate synthetase (CPSase). CPSase catalyzes the formation of carbamoyl phosphate from the ammonia moiety of glutamine, carbonate, and phosphate donated by ATP, constituting the first step of 2 biosynthetic pathways, one leading to arginine and/or urea and the other to pyrimidine nucleotides. The small subunit (glutamine amidotransferase) binds and cleaves glutamine to supply the large subunit with the substrate ammonia. In Syntrophotalea carbinolica (strain DSM 2380 / NBRC 103641 / GraBd1) (Pelobacter carbinolicus), this protein is Carbamoyl phosphate synthase small chain.